Consider the following 290-residue polypeptide: MQGRIVKSLAGFYYVESDGVVYQTRARGNFRKKGQIPYVGDWVEFSSQDQSEGYILSIEERKNSLVRPPIVNIDQAVVIMSAKEPDFNANLLDRFLVLLEYKMIQPIIYISKLDLLDDLVVIDDIREHYQNIGYVFCYSQEELLPLLANKVTVFMGQTGVGKSTLLNKIAPELKLETGEISGSLGRGRHTTRAVSFYNVHKGKIADTPGFSSLDYEVDNAEDLNESFPELRRLSHFCKFRSCTHTHEPKCAVKEALTQGQLWQVRYDNYLQFLSEIESRRETYKKVIKRK.

Positions 62 to 213 (KNSLVRPPIV…IADTPGFSSL (152 aa)) constitute a CP-type G domain. GTP is bound by residues 111-114 (SKLD) and 156-164 (GQTGVGKST). Zn(2+) contacts are provided by Cys-237, Cys-242, His-244, and Cys-250.

The protein belongs to the TRAFAC class YlqF/YawG GTPase family. RsgA subfamily. As to quaternary structure, monomer. Associates with 30S ribosomal subunit, binds 16S rRNA. It depends on Zn(2+) as a cofactor.

Its subcellular location is the cytoplasm. Functionally, one of several proteins that assist in the late maturation steps of the functional core of the 30S ribosomal subunit. Helps release RbfA from mature subunits. May play a role in the assembly of ribosomal proteins into the subunit. Circularly permuted GTPase that catalyzes slow GTP hydrolysis, GTPase activity is stimulated by the 30S ribosomal subunit. This chain is Small ribosomal subunit biogenesis GTPase RsgA, found in Streptococcus agalactiae serotype V (strain ATCC BAA-611 / 2603 V/R).